A 280-amino-acid polypeptide reads, in one-letter code: UPF0276 protein NMA0228 (280 aa).

It belongs to the UPF0276 family.

In Neisseria meningitidis serogroup A / serotype 4A (strain DSM 15465 / Z2491), this protein is UPF0276 protein NMA0228.